Reading from the N-terminus, the 214-residue chain is MQNLIVAVVAYLIGSVSFAVIVSAAMGLDDPRSYGSGNPGATNVLRSGSKKAAILTLIGDAFKGWLPVWFVVHFGARYGLDDTSVAIAAVAVFLGHLYPAFFRFKGGKGVATAAGVLLAINPILGVATLLTWLIVAFFTRYSSLAALAAAVFAPIFDGFLFGPHIIALAIVVMSSLLVWRHRGNIAKLMRGQESRIGDRKKADAAAKPTAGSDV.

A run of 5 helical transmembrane segments spans residues 4 to 24 (LIVA…IVSA), 52 to 72 (AAIL…WFVV), 82 to 102 (DTSV…PAFF), 118 to 138 (LAIN…VAFF), and 159 to 179 (FLFG…LLVW).

Belongs to the PlsY family. In terms of assembly, probably interacts with PlsX.

Its subcellular location is the cell inner membrane. The enzyme catalyses an acyl phosphate + sn-glycerol 3-phosphate = a 1-acyl-sn-glycero-3-phosphate + phosphate. Its pathway is lipid metabolism; phospholipid metabolism. In terms of biological role, catalyzes the transfer of an acyl group from acyl-phosphate (acyl-PO(4)) to glycerol-3-phosphate (G3P) to form lysophosphatidic acid (LPA). This enzyme utilizes acyl-phosphate as fatty acyl donor, but not acyl-CoA or acyl-ACP. The chain is Glycerol-3-phosphate acyltransferase from Paraburkholderia xenovorans (strain LB400).